The sequence spans 288 residues: uncharacterized protein (288 aa).

Residues 1–12 (MTEGRCAQHPDG) show a composition bias toward basic and acidic residues. The tract at residues 1-20 (MTEGRCAQHPDGLDVQDVCD) is disordered.

This sequence belongs to the class IV-like SAM-binding methyltransferase superfamily. RNA methyltransferase TrmH family.

This is an uncharacterized protein from Mycobacterium bovis (strain ATCC BAA-935 / AF2122/97).